We begin with the raw amino-acid sequence, 103 residues long: Large ribosomal subunit protein uL24 (103 aa).

This sequence belongs to the universal ribosomal protein uL24 family. Part of the 50S ribosomal subunit.

One of two assembly initiator proteins, it binds directly to the 5'-end of the 23S rRNA, where it nucleates assembly of the 50S subunit. Functionally, one of the proteins that surrounds the polypeptide exit tunnel on the outside of the subunit. The protein is Large ribosomal subunit protein uL24 of Actinobacillus pleuropneumoniae serotype 5b (strain L20).